A 585-amino-acid polypeptide reads, in one-letter code: Epithelial sodium channel subunit gamma (585 aa).

Residues 1-55 (MAPGEKIKAKIKKNLPVTGPQAPTIKELMRWYCLNTNTHGCRRIVVSRGRLRRLL) lie on the Cytoplasmic side of the membrane. A helical transmembrane segment spans residues 56–76 (WIGFTLTAVALILWQCALLVF). At 77–477 (SFYTVSVSIK…GGQLGLWMSC (401 aa)) the chain is on the extracellular side. Cystine bridges form between C100-C219, C308-C393, C330-C389, C334-C385, C343-C370, and C345-C359. N207 carries an N-linked (GlcNAc...) asparagine glycan. N-linked (GlcNAc...) asparagine glycosylation is present at N433. The chain crosses the membrane as a helical span at residues 478–498 (SVVCVIEIIEVFFIDFFSIIA). The Cytoplasmic portion of the chain corresponds to 499–585 (RRQWQKAKEW…LTDTQMLDEL (87 aa)). The segment at 513-534 (QAPPCPEAPRSPQGQDNPALDI) is disordered. Residues 559–563 (PPPKY) carry the PY motif; recruits WW domain-containing proteins and is thereby required for ubiquitination and inhibition of the channel by NEDD4 and NEDD4L motif.

The protein belongs to the amiloride-sensitive sodium channel (TC 1.A.6) family. SCNN1G subfamily. As to quaternary structure, component of the heterotrimeric epithelial sodium channel (ENaC) composed of an alpha/SCNN1A, a beta/SCNN1B and a gamma/SCNN1G subunit. An additional delta/SCNN1D subunit can replace the alpha/SCNN1A subunit to form an alternative channel with specific properties. Interacts with WWP1 (via WW domains). Interacts with WWP2 (via WW domains); inhibits the channel. Interacts with the full-length immature form of PCSK9 (pro-PCSK9); inhibits ENaC by promoting its proteasomal degradation. Interacts with BPIFA1; the interaction is indirect via SCNN1B and inhibits the proteolytic maturation of SCNN1A and SCNN1G and the activation of ENaC. In terms of processing, phosphorylated on serine and threonine residues. Aldosterone and insulin increase the basal level of phosphorylation. Post-translationally, ubiquitinated. Can be ubiquitinated at multiple sites and undergo monoubiquitination and polyubiquitination. Ubiquitination by NEDD4 or NEDD4L inhibits the ENaC channel through endocytosis, intracellular retention and degradation of its individual subunits. ENaC is activated through the proteolytic maturation of its subunits. Furin cleaves the SCNN1G subunit first, followed by cleavage by prostasin (PRSS8), which results in a stepwise increase in the open probability of the channel due to the release of an inhibitory tract. BPIFA1, which is recruited by the SCNN1B subunit, prevents the proteolytic activation of ENaC. In terms of processing, N-glycosylated. N-linked glycans are processed to complex type during ENaC complex assembly and transport to the plasma membrane.

The protein resides in the apical cell membrane. The enzyme catalyses Na(+)(in) = Na(+)(out). Its activity is regulated as follows. Originally identified and characterized by its inhibition by the diuretic drug amiloride. Functionally, this is one of the three pore-forming subunits of the heterotrimeric epithelial sodium channel (ENaC), a critical regulator of sodium balance and fluid homeostasis. ENaC operates in epithelial tissues, where it mediates the electrodiffusion of sodium ions from extracellular fluid through the apical membrane of cells, with water following osmotically. It plays a key role in maintaining sodium homeostasis through electrogenic sodium reabsorption in the kidneys. Additionally, ENaC is essential for airway surface liquid homeostasis, which is crucial for proper mucus clearance. This is Epithelial sodium channel subunit gamma from Pan troglodytes (Chimpanzee).